Consider the following 801-residue polypeptide: Ribosome biogenesis protein ERB1 (801 aa).

Disordered stretches follow at residues 1–135 (MGSK…LEDR) and 358–377 (PEYL…DPED). The span at 35–90 (SEDEEDYIPSSEVDEDDDDDADESASEDSDDSNDSEDDEVEEDDEALLSDEIPSEG) shows a compositional bias: acidic residues. Basic and acidic residues-rich tracts occupy residues 91 to 113 (ESEK…KEPS), 124 to 135 (PPRKEDEELEDR), and 362 to 377 (PTKE…DPED). WD repeat units lie at residues 451-490 (GHEG…QVWS) and 494-534 (NGDE…VTPA). Residues 546–570 (GFGHATNGKQQANLPPGKEPPGKWA) form a disordered region. 5 WD repeats span residues 586–628 (TVRS…TQIP), 631–669 (KLNG…LVKI), 672–711 (PGAK…RPYK), 715–755 (FHTE…DQLE), and 771–801 (VNKL…RLWM).

Belongs to the WD repeat BOP1/ERB1 family. Component of the NOP7 complex, composed of ERB1, NOP7 and YTM1. The complex is held together by ERB1, which interacts with NOP7 via its N-terminal domain and with YTM1 via a high-affinity interaction between the seven-bladed beta-propeller domains of the 2 proteins. The NOP7 complex associates with the 66S pre-ribosome.

The protein localises to the nucleus. The protein resides in the nucleolus. It is found in the nucleoplasm. Functionally, component of the NOP7 complex, which is required for maturation of the 25S and 5.8S ribosomal RNAs and formation of the 60S ribosome. This chain is Ribosome biogenesis protein ERB1, found in Chaetomium thermophilum (strain DSM 1495 / CBS 144.50 / IMI 039719) (Thermochaetoides thermophila).